Reading from the N-terminus, the 728-residue chain is Catalase-peroxidase (728 aa).

The first 19 residues, 1–19 (MSTEAKCPVTGGATRSSSA), serve as a signal peptide directing secretion. A disordered region spans residues 1–20 (MSTEAKCPVTGGATRSSSAG). A cross-link (tryptophyl-tyrosyl-methioninium (Trp-Tyr) (with M-245)) is located at residues 96 to 219 (WHAAGTYRIG…LAAVQMGLIY (124 aa)). Catalysis depends on His97, which acts as the Proton acceptor. Residues 219-245 (YVNPEGPNGKPDPVAAARDIRETFARM) constitute a cross-link (tryptophyl-tyrosyl-methioninium (Tyr-Met) (with W-96)). Position 260 (His260) interacts with heme b.

Belongs to the peroxidase family. Peroxidase/catalase subfamily. Homodimer or homotetramer. Heme b is required as a cofactor. In terms of processing, formation of the three residue Trp-Tyr-Met cross-link is important for the catalase, but not the peroxidase activity of the enzyme.

It catalyses the reaction H2O2 + AH2 = A + 2 H2O. It carries out the reaction 2 H2O2 = O2 + 2 H2O. Bifunctional enzyme with both catalase and broad-spectrum peroxidase activity. This is Catalase-peroxidase from Acidiphilium cryptum (strain JF-5).